Consider the following 254-residue polypeptide: HTH-type transcriptional repressor DasR (254 aa).

In terms of domain architecture, HTH gntR-type spans 17–87 (RTARVPKYYR…QGKGTFVAKP (71 aa)). The segment at residues 47–66 (ERTLAAEFDTSRTTVRQALQ) is a DNA-binding region (H-T-H motif).

It is found in the cytoplasm. Its activity is regulated as follows. Binding to the target genes is abolished by GlcN6P, a central molecule in N-acetylglucosamine metabolism. Its function is as follows. Global regulator that is part of the nutrient-sensing system. In the absence of glucosamine 6-P (GlcN6P), represses the phosphotransferase system (PTS) specific for the uptake of N-acetylglucosamine (PTSNag), and genes involved in the metabolism of chitin, as well as several genes involved in development, thereby linking carbon availability to morphogenesis. Also regulates the expression of the ABC transporters DasABC and NgcEFG, which are involved in N,N'-diacetylchitobiose ((GlcNAc)2) uptake. Binds to the DNA consensus sequence 5'-ACTGGTCTAGACCACT-3'. This chain is HTH-type transcriptional repressor DasR (dasR), found in Streptomyces coelicolor (strain ATCC BAA-471 / A3(2) / M145).